Reading from the N-terminus, the 508-residue chain is MEFQKSPDGGWGWVIVVVSFFTQFLSYGSPLAVGVLYVEWLDAFGEGKGKTAWVGSLASGVGLLASPVCSLFVSSFGARPVTIFSGFLVAGGLMLSSLAPNIYFLFFSYGIVVGLGCGLLYTATVTITCQYFDSRRGLALGLISTGSSVGLFIYAALQRMLIEFYGLDGCLLIVGALALNILACGSLMRPLQTSDCPFPEKTAPENVPDRYSMYNEKEKNPEETMNFQDKGYSSEDKCLPNGDWGRETSLPKSLAIAAHTKEPETYKKKVVEQTNFCKQLAKRKWQLYRNYCGETASLFKNKVFSALFIAILLFDIGGFPPSLLMEDVARSYHVREEDLTMPLISIFGIMTAVGKLLLGILADFKWINTLYLYVATLIITGLALCAIPFAKSYVTLAILSGILGFLTGNWSIFPYVTTKTVGIDKLAHAYGILMFFAGLGNSLGPPIVGWFYDWTQTYDIAFYFSGFCVLLGGFILLLAILPCWDMCNKKLPKPAVPTTFFYKVASNV.

At 1–12 the chain is on the cytoplasmic side; sequence MEFQKSPDGGWG. The next 12 membrane-spanning stretches (helical) occupy residues 13–33, 53–73, 80–100, 102–122, 137–157, 164–184, 303–323, 341–361, 370–390, 396–416, 431–451, and 460–480; these read WVIVVVSFFTQFLSYGSPLAV, WVGSLASGVGLLASPVCSLFV, PVTIFSGFLVAGGLMLSSLAP, IYFLFFSYGIVVGLGCGLLYT, GLALGLISTGSSVGLFIYAAL, FYGLDGCLLIVGALALNILAC, VFSALFIAILLFDIGGFPPSL, MPLISIFGIMTAVGKLLLGIL, LYLYVATLIITGLALCAIPFA, LAILSGILGFLTGNWSIFPYV, GILMFFAGLGNSLGPPIVGWF, and IAFYFSGFCVLLGGFILLLAI. Over 481 to 508 the chain is Cytoplasmic; sequence LPCWDMCNKKLPKPAVPTTFFYKVASNV.

The protein belongs to the major facilitator superfamily. Monocarboxylate porter (TC 2.A.1.13) family.

Its subcellular location is the cell membrane. It carries out the reaction creatine(in) = creatine(out). The catalysed reaction is (R)-carnitine(in) = (R)-carnitine(out). Its function is as follows. Extracellular pH-and Na(+)-sensitive low-affinity creatine transporter. Also functions as a pH-independent carnitine efflux transporter. In Mus musculus (Mouse), this protein is Monocarboxylate transporter 9 (Slc16a9).